The primary structure comprises 265 residues: Novel plant SNARE 12 (265 aa).

At 1–217 (MASELPMSPH…IGRQVATDKC (217 aa)) the chain is on the cytoplasmic side. A coiled-coil region spans residues 32-106 (LDKIKDSSRQ…ALRKTYLNTL (75 aa)). Ser74 carries the phosphoserine modification. Residues 146 to 208 (MKRMDETDQA…KKASQLVKEI (63 aa)) form the t-SNARE coiled-coil homology domain. The chain crosses the membrane as a helical; Anchor for type IV membrane protein span at residues 218 to 238 (IMAFLFLIVCGVIAIIIVKIV). Over 239-265 (NPNNKDIRDIPGLAPPAQSRKLLYFRE) the chain is Vesicular.

The protein belongs to the novel plant SNARE family. Expressed in roots, stems, flower, siliques and leaves.

It is found in the membrane. Functionally, vesicle trafficking protein that functions in the secretory pathway. This is Novel plant SNARE 12 (NPSN12) from Arabidopsis thaliana (Mouse-ear cress).